Here is a 160-residue protein sequence, read N- to C-terminus: SKP1-like protein 1A (160 aa).

The segment at 102–160 (ILAANYLNIKNLLDLTCQTVADMIKGKTPEEIRTTFNIKNDFTPEEEEEVRRENQWAFE) is interaction with the F-box domain of F-box proteins.

Belongs to the SKP1 family. As to quaternary structure, part of a SCF E3 ubiquitin ligase complex composed of SKP1, CUL1, RBX1 (RBX1A or RBX1B) and F-box proteins. Interacts with SKIP1, SKIP2, SKIP3, SKIP4, SKIP6, FIB1/SKIP7, SKIP8, PP2A11/SKIP10, SKIP11, PP2B11/SKIP12, PP2A14/SKIP13, SKIP14, SKIP15, SKIP16, SKIP19/FBL20, SKIP20, PP2B1/SKIP21, SKIP22, SKIP23, SKIP24, SKIP25, TULP10/SKIP26, SKIP27, SKIP28/MEE11, AFR/SKIP29, SKIP30, SKIP31, SKIP32/FBP7, SKIP33, SKIP35, ADO1/ZTL, ADO2/LKP2, ADO3/FKF1, AFR, COI1, DOR, EBF1, EBF2, EID1, ORE9, PP2A13/SKIP9, TIR1, UFO, SKP2A, CPR1/CPR30, FBL17, NUP58, At1g55000, At1g67340, At1g78100, At3g04660, At3g61590, At4g38940 and At5g49610. The SKP1A subunit of the SCF E3 ubiquitin ligase complex can interact directly with KIN10, KIN11 and the proteasome subunit PAD1. This interaction can be disrupted by PRL1. In case of polerovirus infection, part of a SCF P0 complex composed of the viral silencing suppressor P0, SKP1 and CUL1. Interacts with turnip yellows virus P0. Interacts with VBF and Agrobacterium virF. Binds to KIB1. In terms of tissue distribution, accumulates only in meristematic cells. Expressed in inflorescence, shoot and root apical meristems, as well as in developing organs such as gametocytes and seeds. Also detected in cortical layer and epidermis of roots, leaves, pith and vascular bundle of young stem, young floral buds and organ primordia, pollen and through the valve of siliques. Not detectable in mature root tissues.

The protein resides in the nucleus. It localises to the cytoplasm. The protein localises to the cytoskeleton. It is found in the spindle. Its subcellular location is the phragmoplast. It functions in the pathway protein modification; protein ubiquitination. Functionally, involved in ubiquitination and subsequent proteasomal degradation of target proteins. Together with CUL1, RBX1 and a F-box protein, it forms a SCF E3 ubiquitin ligase complex. The functional specificity of this complex depends on the type of F-box protein. In the SCF complex, it serves as an adapter that links the F-box protein to CUL1. SCF(UFO) is required for vegetative and floral organ development as well as for male gametogenesis. SCF(TIR1) is involved in auxin signaling pathway. SCF(COI1) regulates responses to jasmonates. SCF(EID1) and SCF(AFR) are implicated in phytochrome A light signaling. SCF(ADO1), SCF(ADO2), SCF(ADO3) are related to the circadian clock. SCF(ORE9) seems to be involved in senescence. SCF(EBF1/EBF2) may regulate ethylene signaling. Plays a role during embryogenesis and early postembryonic development, especially during cell elongation and division. Contributes to the correct chromosome segregation during tetrad formation. The polypeptide is SKP1-like protein 1A (Arabidopsis thaliana (Mouse-ear cress)).